The sequence spans 77 residues: Large ribosomal subunit protein eL20 (77 aa).

This sequence belongs to the eukaryotic ribosomal protein eL20 family. In terms of assembly, part of the 50S ribosomal subunit. Binds 23S rRNA.

The sequence is that of Large ribosomal subunit protein eL20 from Pyrococcus horikoshii (strain ATCC 700860 / DSM 12428 / JCM 9974 / NBRC 100139 / OT-3).